The sequence spans 684 residues: Protein-glutamine gamma-glutamyltransferase 4 (684 aa).

Active-site residues include Cys268, His327, and Asp350. Asn390, Asp392, Glu442, and Glu447 together coordinate Ca(2+).

It belongs to the transglutaminase superfamily. Transglutaminase family. In terms of assembly, homodimer. It depends on Ca(2+) as a cofactor. In terms of tissue distribution, prostate.

The catalysed reaction is L-glutaminyl-[protein] + L-lysyl-[protein] = [protein]-L-lysyl-N(6)-5-L-glutamyl-[protein] + NH4(+). In terms of biological role, associated with the mammalian reproductive process. Catalyzes the cross-linking of proteins and the conjugation of polyamines to specific proteins in the seminal tract. The chain is Protein-glutamine gamma-glutamyltransferase 4 (TGM4) from Homo sapiens (Human).